Here is a 4486-residue protein sequence, read N- to C-terminus: Dynein axonemal heavy chain 9 (4486 aa).

The tract at residues M1 to L1831 is stem. Coiled coils occupy residues D381–D410, Q504–I529, A639–L662, T752–T823, and N1326–A1355. AAA regions lie at residues Y1832 to V2053, A2113 to K2334, E2440 to G2688, and N2787 to Y3036. ATP contacts are provided by residues G1870–T1877, G2151–S2158, G2478–S2485, and G2825–Q2832. Coiled coils occupy residues Y3051–E3154, K3285–T3341, and L3640–Y3675. Residues Y3051–T3341 are stalk. AAA stretches follow at residues L3429–K3656 and L3866–N4092.

This sequence belongs to the dynein heavy chain family. In terms of assembly, consists of at least two heavy chains and a number of intermediate and light chains. Interacts with ODAD1. As to expression, expressed in upper and lower respiratory airway epithelia (at protein level). Not detected in spermatozoa (at protein level).

The protein resides in the cytoplasm. It is found in the cytoskeleton. The protein localises to the cilium axoneme. In terms of biological role, force generating protein required for cilia beating in respiratory epithelia. Produces force towards the minus ends of microtubules. Dynein has ATPase activity; the force-producing power stroke is thought to occur on release of ADP. In Homo sapiens (Human), this protein is Dynein axonemal heavy chain 9.